Here is a 279-residue protein sequence, read N- to C-terminus: Biotin synthase (279 aa).

The Radical SAM core domain occupies 1–227 (MKVYLCAISN…NAMIMVAGGR (227 aa)). Residues cysteine 16, cysteine 20, and cysteine 23 each coordinate [4Fe-4S] cluster. 3 residues coordinate [2Fe-2S] cluster: cysteine 60, cysteine 95, and cysteine 153.

Belongs to the radical SAM superfamily. Biotin synthase family. In terms of assembly, homodimer. It depends on [4Fe-4S] cluster as a cofactor. Requires [2Fe-2S] cluster as cofactor.

It catalyses the reaction (4R,5S)-dethiobiotin + (sulfur carrier)-SH + 2 reduced [2Fe-2S]-[ferredoxin] + 2 S-adenosyl-L-methionine = (sulfur carrier)-H + biotin + 2 5'-deoxyadenosine + 2 L-methionine + 2 oxidized [2Fe-2S]-[ferredoxin]. It functions in the pathway cofactor biosynthesis; biotin biosynthesis; biotin from 7,8-diaminononanoate: step 2/2. Catalyzes the conversion of dethiobiotin (DTB) to biotin by the insertion of a sulfur atom into dethiobiotin via a radical-based mechanism. The sequence is that of Biotin synthase from Nitratiruptor sp. (strain SB155-2).